Reading from the N-terminus, the 648-residue chain is Pesticidal crystal protein Cry19Aa (648 aa).

The protein belongs to the delta endotoxin family.

Promotes colloidosmotic lysis by binding to the midgut epithelial cells of mosquitos. The protein is Pesticidal crystal protein Cry19Aa (cry19Aa) of Bacillus thuringiensis subsp. jegathesan.